The following is a 462-amino-acid chain: Annexin A7 (462 aa).

A disordered region spans residues 1 to 130 (MSYPPNQGYP…QGYPPQQGYP (130 aa)). Residues 7-131 (QGYPPQSNSP…GYPPQQGYPP (125 aa)) form a 19 X 6 AA tandem repeats of Q-G-Y-P-P-Q region. Low complexity predominate over residues 16-130 (PQPGQYGAPQ…QGYPPQQGYP (115 aa)). 4 Annexin repeats span residues 161 to 232 (HDCK…ALLT), 233 to 304 (EPAH…KLTE), 315 to 388 (MQVS…AIVT), and 392 to 462 (NPYG…DIIS).

It belongs to the annexin family.

Calcium/phospholipid-binding protein which promotes membrane fusion and is involved in exocytosis. In Dictyostelium discoideum (Social amoeba), this protein is Annexin A7 (nxnA).